The chain runs to 1578 residues: E3 ubiquitin-protein ligase HECW2 (1578 aa).

The residue at position 48 (serine 48) is a Phosphoserine. The region spanning 171-298 (MEGGASGSLH…LERQAGDQML (128 aa)) is the C2 domain. Disordered regions lie at residues 341–453 (HTVN…FPTD) and 496–802 (IDDG…PSVR). Residues 386–406 (RTSSTLEIDTEDLISTSSRNS) are compositionally biased toward polar residues. A compositionally biased stretch (basic and acidic residues) spans 518 to 532 (ASIHETASLEERLEN). Residues 559–576 (SADQGSTELCSSQEVDQP) show a composition bias toward polar residues. The segment covering 577–593 (TSGADAGASDTSGGSRR) has biased composition (low complexity). Polar residues-rich tracts occupy residues 597-614 (ETES…SSET), 643-664 (SSCN…SSLE), and 688-708 (PTSS…SSLP). Low complexity-rich tracts occupy residues 721 to 735 (AAEA…ELGE), 746 to 755 (AAAAAPAAAA), and 769 to 782 (AQGA…QEEG). Positions 737 to 1074 (WQRRGSLEGA…PRPSSTFNTV (338 aa)) are interaction with TP73. The WW 1 domain maps to 813-846 (EALPPNWEARIDSHGRIFYVDHVNRTTTWQRPTA). The stretch at 853 to 880 (LQRSNSIQQMEQLNRRYQSIRRTMTNER) forms a coiled coil. Phosphoserine is present on residues serine 858 and serine 915. The WW 2 domain maps to 991-1024 (LELPRGWEMKHDHQGKAFFVDHNSRTTTFIDPRL). 2 disordered regions span residues 1030 to 1075 (RPTS…NTVS) and 1167 to 1193 (CQSP…RAPA). Positions 1037-1046 (HRQHLTRQRS) are enriched in basic residues. Positions 1167–1187 (CQSPRGSPVSSPQNSPGTQRA) are enriched in polar residues. Position 1181 is a phosphoserine (serine 1181). In terms of domain architecture, HECT spans 1243-1578 (SRKDLQRNKL…VEETSTFGLE (336 aa)). The active-site Glycyl thioester intermediate is the cysteine 1546.

As to quaternary structure, interacts with TP73. Interacts with FZR1.

The protein localises to the cytoplasm. It localises to the cytoskeleton. It is found in the spindle. The catalysed reaction is S-ubiquitinyl-[E2 ubiquitin-conjugating enzyme]-L-cysteine + [acceptor protein]-L-lysine = [E2 ubiquitin-conjugating enzyme]-L-cysteine + N(6)-ubiquitinyl-[acceptor protein]-L-lysine.. Its pathway is protein modification; protein ubiquitination. Its function is as follows. E3 ubiquitin-protein ligase that mediates ubiquitination of TP73. Acts to stabilize TP73 and enhance activation of transcription by TP73. Involved in the regulation of mitotic metaphase/anaphase transition. The protein is E3 ubiquitin-protein ligase HECW2 (Hecw2) of Mus musculus (Mouse).